The following is a 166-amino-acid chain: Small ribosomal subunit protein uS5 (166 aa).

Residues 11-74 (LQEKLIAVNR…EKARRNMINV (64 aa)) enclose the S5 DRBM domain.

This sequence belongs to the universal ribosomal protein uS5 family. As to quaternary structure, part of the 30S ribosomal subunit. Contacts proteins S4 and S8.

Its function is as follows. With S4 and S12 plays an important role in translational accuracy. In terms of biological role, located at the back of the 30S subunit body where it stabilizes the conformation of the head with respect to the body. This is Small ribosomal subunit protein uS5 from Pasteurella multocida (strain Pm70).